The following is a 484-amino-acid chain: Putative amidase AmiA2 (484 aa).

Residues Lys93 and Ser167 each act as charge relay system in the active site. The active-site Acyl-ester intermediate is the Ser191.

The protein belongs to the amidase family.

It catalyses the reaction a monocarboxylic acid amide + H2O = a monocarboxylate + NH4(+). This Mycobacterium bovis (strain ATCC BAA-935 / AF2122/97) protein is Putative amidase AmiA2 (amiA2).